A 262-amino-acid chain; its full sequence is Translation initiation factor 2 subunit alpha (262 aa).

The S1 motif domain occupies 15 to 86; the sequence is GELVVGTVHK…RKGHVDVSMK (72 aa).

It belongs to the eIF-2-alpha family. Heterotrimer composed of an alpha, a beta and a gamma chain.

Its function is as follows. eIF-2 functions in the early steps of protein synthesis by forming a ternary complex with GTP and initiator tRNA. This is Translation initiation factor 2 subunit alpha (eif2a) from Methanothermobacter thermautotrophicus (strain ATCC 29096 / DSM 1053 / JCM 10044 / NBRC 100330 / Delta H) (Methanobacterium thermoautotrophicum).